The chain runs to 508 residues: Glycerol kinase (508 aa).

T14 provides a ligand contact to ADP. ATP contacts are provided by T14, T15, and S16. Residue T14 coordinates sn-glycerol 3-phosphate. R18 contributes to the ADP binding site. 3 residues coordinate sn-glycerol 3-phosphate: R84, E85, and Y136. The glycerol site is built by R84, E85, and Y136. H232 bears the Phosphohistidine; by HPr mark. A sn-glycerol 3-phosphate-binding site is contributed by D246. D246 and Q247 together coordinate glycerol. Positions 268 and 311 each coordinate ADP. The ATP site is built by T268, G311, Q315, and G412. The ADP site is built by G412 and N416.

Belongs to the FGGY kinase family. As to quaternary structure, homotetramer and homodimer (in equilibrium). In terms of processing, the phosphoenolpyruvate-dependent sugar phosphotransferase system (PTS), including enzyme I, and histidine-containing protein (HPr) are required for the phosphorylation, which leads to the activation of the enzyme.

It carries out the reaction glycerol + ATP = sn-glycerol 3-phosphate + ADP + H(+). It participates in polyol metabolism; glycerol degradation via glycerol kinase pathway; sn-glycerol 3-phosphate from glycerol: step 1/1. Its activity is regulated as follows. Activated by phosphorylation and inhibited by fructose 1,6-bisphosphate (FBP). Key enzyme in the regulation of glycerol uptake and metabolism. Catalyzes the phosphorylation of glycerol to yield sn-glycerol 3-phosphate. This is Glycerol kinase from Streptococcus pyogenes serotype M12 (strain MGAS2096).